The primary structure comprises 168 residues: Ribosome maturation factor RimM (168 aa).

Positions 95–168 (EEGYYWSDLI…RITVDWGLDY (74 aa)) constitute a PRC barrel domain.

It belongs to the RimM family. In terms of assembly, binds ribosomal protein uS19.

It localises to the cytoplasm. In terms of biological role, an accessory protein needed during the final step in the assembly of 30S ribosomal subunit, possibly for assembly of the head region. Essential for efficient processing of 16S rRNA. May be needed both before and after RbfA during the maturation of 16S rRNA. It has affinity for free ribosomal 30S subunits but not for 70S ribosomes. The sequence is that of Ribosome maturation factor RimM from Nitrosospira multiformis (strain ATCC 25196 / NCIMB 11849 / C 71).